The sequence spans 346 residues: Melanoma-associated antigen B4 (346 aa).

Residues 1-18 (MPRGQKSKLRAREKRQRT) are compositionally biased toward basic residues. Residues 1-107 (MPRGQKSKLR…STSTERSLKD (107 aa)) are disordered. Positions 45–54 (VLRDTASSSL) are enriched in polar residues. Residues 92–101 (ASSSQASTST) show a composition bias toward low complexity. The region spanning 109-307 (LTRKTKMLVQ…NNFPLLYEEA (199 aa)) is the MAGE domain. The disordered stretch occupies residues 311–346 (EEERAGARPRVAARRGTTAMTSAYSRATSSSSSQPM). Low complexity predominate over residues 318-346 (RPRVAARRGTTAMTSAYSRATSSSSSQPM).

In terms of tissue distribution, expressed in testis.

The protein resides in the cytoplasm. The polypeptide is Melanoma-associated antigen B4 (MAGEB4) (Homo sapiens (Human)).